The sequence spans 346 residues: tRNA pseudouridine synthase D (346 aa).

The Nucleophile role is filled by D83. The region spanning 159–305 (GVPNYFGEQR…LKQERRALRV (147 aa)) is the TRUD domain.

This sequence belongs to the pseudouridine synthase TruD family.

It carries out the reaction uridine(13) in tRNA = pseudouridine(13) in tRNA. Functionally, responsible for synthesis of pseudouridine from uracil-13 in transfer RNAs. The chain is tRNA pseudouridine synthase D from Hydrogenovibrio crunogenus (strain DSM 25203 / XCL-2) (Thiomicrospira crunogena).